Consider the following 88-residue polypeptide: Small cysteine-rich outer membrane protein OmcA (88 aa).

The first 18 residues, methionine 1 to serine 18, serve as a signal peptide directing secretion. Residue cysteine 19 is the site of N-palmitoyl cysteine attachment. A lipid anchor (S-diacylglycerol cysteine) is attached at cysteine 19.

In terms of assembly, part of a disulfide cross-linked outer membrane complex (COMC) composed of the major outer membrane porin (MOMP), the small cysteine-rich protein (OmcA) and the large cysteine-rich periplasmic protein (OmcB).

It localises to the cell outer membrane. In elementary bodies (EBs, the infectious stage, which is able to survive outside the host cell) provides the structural integrity of the outer envelope through disulfide cross-links with the large cysteine-rich periplasmic protein and the major outer membrane porin. It has been described in publications as the Sarkosyl-insoluble COMC (Chlamydia outer membrane complex), and serves as the functional equivalent of peptidoglycan. The sequence is that of Small cysteine-rich outer membrane protein OmcA (omcA) from Chlamydia muridarum (strain MoPn / Nigg).